The sequence spans 137 residues: ATP synthase epsilon chain, chloroplastic (137 aa).

The protein belongs to the ATPase epsilon chain family. F-type ATPases have 2 components, CF(1) - the catalytic core - and CF(0) - the membrane proton channel. CF(1) has five subunits: alpha(3), beta(3), gamma(1), delta(1), epsilon(1). CF(0) has three main subunits: a, b and c.

The protein localises to the plastid. Its subcellular location is the chloroplast thylakoid membrane. Functionally, produces ATP from ADP in the presence of a proton gradient across the membrane. The polypeptide is ATP synthase epsilon chain, chloroplastic (Pinus thunbergii (Japanese black pine)).